The following is a 171-amino-acid chain: Shikimate kinase (171 aa).

14–19 contacts ATP; it reads GAGKST. Residue Ser-18 participates in Mg(2+) binding. Residues Asp-36, Arg-60, and Gly-82 each contribute to the substrate site. Arg-120 contacts ATP. Substrate is bound at residue Arg-139. Residue Gln-156 participates in ATP binding.

This sequence belongs to the shikimate kinase family. Monomer. Mg(2+) serves as cofactor.

The protein localises to the cytoplasm. It catalyses the reaction shikimate + ATP = 3-phosphoshikimate + ADP + H(+). Its pathway is metabolic intermediate biosynthesis; chorismate biosynthesis; chorismate from D-erythrose 4-phosphate and phosphoenolpyruvate: step 5/7. Its function is as follows. Catalyzes the specific phosphorylation of the 3-hydroxyl group of shikimic acid using ATP as a cosubstrate. The chain is Shikimate kinase from Shewanella baltica (strain OS195).